A 300-amino-acid polypeptide reads, in one-letter code: CDP-diacylglycerol--serine O-phosphatidyltransferase (300 aa).

6 consecutive transmembrane segments (helical) span residues 10–30 (AVNL…AGLT), 74–94 (IDSL…LYAT), 95–115 (MLST…CVVL), 135–155 (EFFV…LLAL), 162–182 (GWWT…MLLI), and 207–227 (LAIF…VIIL).

This sequence belongs to the CDP-alcohol phosphatidyltransferase class-I family.

The protein localises to the cell membrane. The catalysed reaction is a CDP-1,2-diacyl-sn-glycerol + L-serine = a 1,2-diacyl-sn-glycero-3-phospho-L-serine + CMP + H(+). The chain is CDP-diacylglycerol--serine O-phosphatidyltransferase (pssA) from Mycobacterium leprae (strain TN).